The following is a 343-amino-acid chain: UDP-glucuronic acid decarboxylase 6 (343 aa).

The interval 1 to 22 is disordered; it reads MASNSSNGTTTTKPPPMPSPLR. An N-acetylalanine modification is found at alanine 2. NAD(+) is bound at residue 62-87; sequence DNYFTGSKDNLKKWIGHPRFELIRHD. Arginine 171 is a binding site for substrate. Tyrosine 174 functions as the Proton acceptor in the catalytic mechanism. 174 to 178 is an NAD(+) binding site; that stretch reads YDEGK. Asparagine 203 serves as a coordination point for substrate. Arginine 215 contacts NAD(+). Substrate is bound by residues 216–220, 233–240, and 300–304; these read VVSNF, QKPGTQTR, and DPRQR.

The protein belongs to the NAD(P)-dependent epimerase/dehydratase family. UDP-glucuronic acid decarboxylase subfamily. Requires NAD(+) as cofactor.

It localises to the cytoplasm. It carries out the reaction UDP-alpha-D-glucuronate + H(+) = UDP-alpha-D-xylose + CO2. Its pathway is nucleotide-sugar biosynthesis; UDP-alpha-D-xylose biosynthesis; UDP-alpha-D-xylose from UDP-alpha-D-glucuronate: step 1/1. Its function is as follows. Catalyzes the NAD-dependent decarboxylation of UDP-glucuronic acid to UDP-xylose. Necessary for the biosynthesis of the core tetrasaccharide in glycosaminoglycan biosynthesis. This Arabidopsis thaliana (Mouse-ear cress) protein is UDP-glucuronic acid decarboxylase 6 (UXS6).